The primary structure comprises 443 residues: uncharacterized protein (443 aa).

This is an uncharacterized protein from Mycoplasma genitalium (strain ATCC 33530 / DSM 19775 / NCTC 10195 / G37) (Mycoplasmoides genitalium).